A 265-amino-acid polypeptide reads, in one-letter code: Synaptoporin (265 aa).

The Cytoplasmic portion of the chain corresponds to 1–4 (MCMV). The MARVEL domain maps to 1-202 (MCMVIFAPLF…NIWFVFKETG (202 aa)). The chain crosses the membrane as a helical span at residues 5–25 (IFAPLFAMFAFATCGGYSGGL). Residues 26–81 (RLSVDCVNKTESNLSIDIAFAYPFRLQQVTFEVPTCEGKEQQKLALVGDSSSSAEF) are Vesicular-facing. N-linked (GlcNAc...) asparagine glycans are attached at residues N33 and N38. Residues 82–102 (FVTVAVFAFLYSLAATVVYIF) form a helical membrane-spanning segment. At 103–114 (FQNKYRENNRGP) the chain is on the cytoplasmic side. A helical membrane pass occupies residues 115-135 (LIDFIVTVVFSFLWLVGSSAW). The Vesicular portion of the chain corresponds to 136 to 177 (AKGLSDVKVATDPKEVLLLMSACKQPSNKCMAVHSPVMSSLN). A helical transmembrane segment spans residues 178-198 (TSVVFGFLNFILWAGNIWFVF). At 199–265 (KETGWHSSGQ…SGPTSFNNQI (67 aa)) the chain is on the cytoplasmic side. Tandem repeats lie at residues 210–214 (YLSDP), 222–226 (YNQGR), 227–231 (YNQES), 232–236 (YGSSG), and 238–242 (YSQQA). Positions 210–242 (YLSDPMEKHSSSYNQGRYNQESYGSSGGYSQQA) are 5 X approximate repeats. S212 is modified (phosphoserine). Residues 221-230 (SYNQGRYNQE) are compositionally biased toward polar residues. Residues 221 to 265 (SYNQGRYNQESYGSSGGYSQQANLGPTSDEFGQQPSGPTSFNNQI) are disordered. Residues 240 to 265 (QQANLGPTSDEFGQQPSGPTSFNNQI) are compositionally biased toward polar residues.

Belongs to the synaptophysin/synaptobrevin family.

Its subcellular location is the cytoplasmic vesicle. It localises to the secretory vesicle. It is found in the synaptic vesicle membrane. The protein localises to the synapse. The protein resides in the synaptosome. Its function is as follows. Intrinsic membrane protein of small synaptic vesicles. Probable vesicular channel protein. The protein is Synaptoporin (Synpr) of Mus musculus (Mouse).